A 556-amino-acid chain; its full sequence is Thermosome subunit beta (556 aa).

Residues 530–556 (LSTDKGDDDGGAGGMGGGMGGGMGGMM) form a disordered region. A compositionally biased stretch (gly residues) spans 540-556 (GAGGMGGGMGGGMGGMM).

The protein belongs to the TCP-1 chaperonin family. In terms of assembly, forms an oligomeric complex of eight-membered rings.

Molecular chaperone; binds unfolded polypeptides in vitro, and has a weak ATPase activity. The polypeptide is Thermosome subunit beta (thsB) (Halobacterium salinarum (strain ATCC 700922 / JCM 11081 / NRC-1) (Halobacterium halobium)).